The chain runs to 351 residues: 3-dehydroquinate synthase (351 aa).

NAD(+)-binding positions include 60–65 (DGEEYK), 94–98 (GVISD), 118–119 (TT), lysine 131, lysine 140, and 158–161 (FLKT). 3 residues coordinate Zn(2+): glutamate 173, histidine 239, and histidine 256.

This sequence belongs to the sugar phosphate cyclases superfamily. Dehydroquinate synthase family. Co(2+) serves as cofactor. It depends on Zn(2+) as a cofactor. NAD(+) is required as a cofactor.

The protein resides in the cytoplasm. It catalyses the reaction 7-phospho-2-dehydro-3-deoxy-D-arabino-heptonate = 3-dehydroquinate + phosphate. Its pathway is metabolic intermediate biosynthesis; chorismate biosynthesis; chorismate from D-erythrose 4-phosphate and phosphoenolpyruvate: step 2/7. In terms of biological role, catalyzes the conversion of 3-deoxy-D-arabino-heptulosonate 7-phosphate (DAHP) to dehydroquinate (DHQ). This is 3-dehydroquinate synthase from Campylobacter jejuni subsp. jejuni serotype O:6 (strain 81116 / NCTC 11828).